A 232-amino-acid chain; its full sequence is F420-dependent NADP reductase (232 aa).

NADP(+) is bound by residues 15-18 (TGDQ), 37-38 (SR), lysine 42, valine 80, valine 106, and alanine 151.

This sequence belongs to the F420-dependent NADP reductase family. Homotetramer.

The catalysed reaction is reduced coenzyme F420-(gamma-L-Glu)(n) + NADP(+) = oxidized coenzyme F420-(gamma-L-Glu)(n) + NADPH + 2 H(+). Catalyzes the reduction of NADP(+) with F420H(2) via hydride transfer, and likely the reverse reaction, i.e. the reduction of F420 with NADPH. Probably functions in the regeneration of NADPH required in biosynthetic reactions. Is specific for reduced F420 as electron donor for the reduction of NADP; neither reduced FAD nor FMN can act as electron donor. The enzyme is also specific for NADP; NAD is not utilized as substrate. This is F420-dependent NADP reductase (fno) from Methanothermobacter thermautotrophicus (strain ATCC 29096 / DSM 1053 / JCM 10044 / NBRC 100330 / Delta H) (Methanobacterium thermoautotrophicum).